We begin with the raw amino-acid sequence, 360 residues long: Ribosomal RNA large subunit methyltransferase F (360 aa).

The segment at 1–38 is disordered; the sequence is MTRSTTPPMRAKHSSAKRSPSRSAAKVNPVSVKPNKPL. The span at 10–20 shows a compositional bias: basic residues; it reads RAKHSSAKRSP.

This sequence belongs to the methyltransferase superfamily. METTL16/RlmF family.

The protein resides in the cytoplasm. The catalysed reaction is adenosine(1618) in 23S rRNA + S-adenosyl-L-methionine = N(6)-methyladenosine(1618) in 23S rRNA + S-adenosyl-L-homocysteine + H(+). Its function is as follows. Specifically methylates the adenine in position 1618 of 23S rRNA. In Shewanella frigidimarina (strain NCIMB 400), this protein is Ribosomal RNA large subunit methyltransferase F.